Here is a 206-residue protein sequence, read N- to C-terminus: Outer-membrane lipoprotein carrier protein (206 aa).

An N-terminal signal peptide occupies residues Met-1–Ala-21.

It belongs to the LolA family. Monomer.

It is found in the periplasm. In terms of biological role, participates in the translocation of lipoproteins from the inner membrane to the outer membrane. Only forms a complex with a lipoprotein if the residue after the N-terminal Cys is not an aspartate (The Asp acts as a targeting signal to indicate that the lipoprotein should stay in the inner membrane). The polypeptide is Outer-membrane lipoprotein carrier protein (Shewanella sp. (strain MR-7)).